Consider the following 301-residue polypeptide: Tetrahydromethanopterin S-methyltransferase subunit E (301 aa).

5 consecutive transmembrane segments (helical) span residues 85–105 (VIFA…TYCI), 130–150 (HTPV…VVSY), 151–171 (IMVA…IWGI), 232–252 (PVTG…TAVF), and 258–278 (LTMG…LIIW).

This sequence belongs to the MtrE family. As to quaternary structure, the complex is composed of 8 subunits; MtrA, MtrB, MtrC, MtrD, MtrE, MtrF, MtrG and MtrH.

Its subcellular location is the cell membrane. It carries out the reaction 5-methyl-5,6,7,8-tetrahydromethanopterin + coenzyme M + 2 Na(+)(in) = 5,6,7,8-tetrahydromethanopterin + methyl-coenzyme M + 2 Na(+)(out). Functionally, part of a complex that catalyzes the formation of methyl-coenzyme M and tetrahydromethanopterin from coenzyme M and methyl-tetrahydromethanopterin. This is an energy-conserving, sodium-ion translocating step. The sequence is that of Tetrahydromethanopterin S-methyltransferase subunit E from Methanococcoides burtonii (strain DSM 6242 / NBRC 107633 / OCM 468 / ACE-M).